A 989-amino-acid polypeptide reads, in one-letter code: DNA-directed RNA polymerase subunit beta' (989 aa).

Positions 383, 385, and 387 each coordinate Mg(2+).

The protein belongs to the RNA polymerase beta' chain family. As to quaternary structure, the RNAP catalytic core consists of 2 alpha, 1 beta, 1 beta' and 1 omega subunit. When a sigma factor is associated with the core the holoenzyme is formed, which can initiate transcription. It depends on Mg(2+) as a cofactor.

The enzyme catalyses RNA(n) + a ribonucleoside 5'-triphosphate = RNA(n+1) + diphosphate. Functionally, DNA-dependent RNA polymerase catalyzes the transcription of DNA into RNA using the four ribonucleoside triphosphates as substrates. In Leuconostoc pseudomesenteroides, this protein is DNA-directed RNA polymerase subunit beta' (rpoC).